The chain runs to 417 residues: Tumor necrosis factor receptor superfamily member 25 (417 aa).

A signal peptide spans 1-24; the sequence is MEQRPRGCAAVAAALLLVLLGARA. The Extracellular portion of the chain corresponds to 25–199; it reads QGGTRSPRCD…RCAAVCGWRQ (175 aa). 4 TNFR-Cys repeats span residues 34–71, 72–115, 116–163, and 164–192; these read DCAGDFHKKIGLFCCRGCPAGHYLKAPCTEPCGNSTCL, VCPQ…DTRC, GCKP…TDCG, and TCLPGFYEHGDGCVSCPTSTLGSCPERCA. 12 disulfide bridges follow: C35-C47, C48-C61, C51-C70, C73-C89, C92-C107, C95-C115, C117-C130, C138-C155, C141-C162, C165-C176, C179-C191, and C187-C195. N67 carries an N-linked (GlcNAc...) asparagine glycan. Residue N106 is glycosylated (N-linked (GlcNAc...) asparagine). Residues 200–220 form a helical membrane-spanning segment; it reads MFWVQVLLAGLVVPLLLGATL. The Cytoplasmic portion of the chain corresponds to 221-417; sequence TYTYRHCWPH…DLRSRLQRGP (197 aa). The region spanning 332–413 is the Death domain; that stretch reads GPQLYDVMDA…GCVEDLRSRL (82 aa). R352 carries a (Microbial infection) N-beta-linked (GlcNAc) arginine glycan.

Homodimer. Interacts strongly via the death domains with TNFRSF1 and TRADD to activate at least two distinct signaling cascades, apoptosis and NF-kappa-B signaling. Interacts with BAG4. (Microbial infection) Glycosylated at Arg-352 by enteropathogenic E.coli protein NleB1. Post-translationally, glycosylated. As to expression, abundantly expressed in thymocytes and lymphocytes. Detected in lymphocyte-rich tissues such as thymus, colon, intestine, and spleen. Also found in the prostate.

The protein resides in the cell membrane. It is found in the secreted. Functionally, receptor for TNFSF12/APO3L/TWEAK. Interacts directly with the adapter TRADD. Mediates activation of NF-kappa-B and induces apoptosis. May play a role in regulating lymphocyte homeostasis. This chain is Tumor necrosis factor receptor superfamily member 25 (TNFRSF25), found in Homo sapiens (Human).